Here is a 102-residue protein sequence, read N- to C-terminus: Gastrin/cholecystokinin-like peptide (102 aa).

The signal sequence occupies residues 1 to 20 (MDKKVCVSILLAMLAIAALC). The propeptide occupies 21-45 (RPMTELESARHGAQRKNSISDVSRR). Tyrosine 86 carries the post-translational modification Sulfotyrosine. Position 92 is a phenylalanine amide (phenylalanine 92). Residues 96-102 (SSEVTES) constitute a propeptide that is removed on maturation.

Belongs to the gastrin/cholecystokinin family. In terms of tissue distribution, expressed in antrum, duodenum, colon, pancreas, brain and testis. No expression found in kidney, lung, liver, skin or distal two-thirds of small intestine. In the brain, strongly expressed in the pituitary gland with moderate expression in the neural lobe, brain stem and hypothalamus.

It is found in the secreted. May control digestion processes. This Aquarana catesbeiana (American bullfrog) protein is Gastrin/cholecystokinin-like peptide (GAST).